A 298-amino-acid chain; its full sequence is Mitochondrial 2-oxodicarboxylate carrier (298 aa).

Solcar repeat units lie at residues 10-99, 106-195, and 204-293; these read HETC…YKKF, SPGL…VKDN, and LEFL…TYAW. The next 6 helical transmembrane spans lie at 16-36, 69-88, 112-132, 166-186, 204-224, and 276-296; these read VAAGGCAGLVEICLMHPLDVV, FGFYKGIIPPILAETPKRAV, PIAGLGSGLTEAVVVNPFEVV, GLNKGFTATLGRHGIFNMTYF, LEFLRKFGIGFVSGTVGSVFN, and LGPGGGVMLLVYEYTYAWLQE.

This sequence belongs to the mitochondrial carrier (TC 2.A.29) family. As to expression, widely expressed.

The protein resides in the mitochondrion inner membrane. The catalysed reaction is 2-oxoadipate(in) + 2-oxoglutarate(out) = 2-oxoadipate(out) + 2-oxoglutarate(in). The enzyme catalyses hexanedioate(in) + 2-oxoglutarate(out) = hexanedioate(out) + 2-oxoglutarate(in). It carries out the reaction L-2-aminoadipate(in) + 2-oxoglutarate(out) = L-2-aminoadipate(out) + 2-oxoglutarate(in). It catalyses the reaction glutarate(in) + 2-oxoglutarate(out) = glutarate(out) + 2-oxoglutarate(in). The catalysed reaction is 2-oxoheptanedioate(in) + 2-oxoglutarate(out) = 2-oxoheptanedioate(out) + 2-oxoglutarate(in). The enzyme catalyses heptanedioate(in) + 2-oxoglutarate(out) = heptanedioate(out) + 2-oxoglutarate(in). It carries out the reaction citrate(in) + 2-oxoglutarate(out) = citrate(out) + 2-oxoglutarate(in). Its function is as follows. Transports dicarboxylates across the inner membranes of mitochondria by a counter-exchange mechanism. Can transport 2-oxoadipate (2-oxohexanedioate), 2-oxoglutarate, adipate (hexanedioate), glutarate, and to a lesser extent, pimelate (heptanedioate), 2-oxopimelate (2-oxoheptanedioate), 2-aminoadipate (2-aminohexanedioate), oxaloacetate, and citrate. Plays a central role in catabolism of lysine, hydroxylysine, and tryptophan, by transporting common metabolite intermediates (such as 2-oxoadipate) into the mitochondria, where it is converted into acetyl-CoA and can enter the citric acid (TCA) cycle. This is Mitochondrial 2-oxodicarboxylate carrier (Slc25a21) from Rattus norvegicus (Rat).